Consider the following 970-residue polypeptide: Cullin-4B (970 aa).

Residues 1–14 (MSRSTRSKERREND) show a composition bias toward basic and acidic residues. Disordered regions lie at residues 1–157 (MSRS…SFCL) and 189–211 (AEESSSSSSSSSPTAATSQQQQQ). T15 is subject to Phosphothreonine. Position 17 is a phosphoserine (S17). Residues 36–57 (PPRPPYPPLLPPVFPPPTPPPQ) show a composition bias toward pro residues. Residues 78-98 (SGFSSPNPSAASAAAQEVRSA) show a composition bias toward low complexity. Over residues 99–109 (TDGNTSTTPPT) the composition is skewed to polar residues. T106 is subject to Phosphothreonine. S110 is subject to Phosphoserine. Positions 112-115 (KKRK) match the Nuclear localization signal motif. Positions 117–126 (NSSSSSSNSS) are enriched in low complexity. Positions 146-155 (DSASPSTSSF) are enriched in polar residues. Phosphoserine is present on residues S154 and S200. Low complexity predominate over residues 192–211 (SSSSSSSSSPTAATSQQQQQ). T202 is modified (phosphothreonine). Residue K247 forms a Glycyl lysine isopeptide (Lys-Gly) (interchain with G-Cter in ubiquitin) linkage. S250 bears the Phosphoserine mark. The region spanning 902–962 (DRQYQIDAAI…RDYMERDKEN (61 aa)) is the Cullin neddylation domain. K916 participates in a covalent cross-link: Glycyl lysine isopeptide (Lys-Gly) (interchain with G-Cter in NEDD8).

It belongs to the cullin family. Component of multiple DCX (DDB1-CUL4-X-box) E3 ubiquitin-protein ligase complexes that seem to be formed of DDB1, CUL4A or CUL4B, RBX1 and a variable substrate recognition component which seems to belong to a protein family described as DCAF (Ddb1- and Cul4-associated factor) or CDW (CUL4-DDB1-associated WD40-repeat) proteins. Component of the DCX(DTL) complex with the putative substrate recognition component DTL. Component of the DCX(DDB2) complex with the putative substrate recognition component DDB2. Component of DCX complexes part of the DesCEND (destruction via C-end degrons) pathway, which contain either TRPC4AP or DCAF12 as substrate-recognition component. Component of the DCX(AMBRA1) complex with the substrate recognition component AMBRA1. Part of a complex with RBX1 and TIP120A/CAND1. Component of the DCX(WDR77) complex, composed of Cul4b, Ddb1, Wdr77 and Rbx1. Interacts with RBX1, GRWD1, MLST8, SMU1, TLE2, TLE3, DCAF1, DDA1, DCAF6, DCAF17, DDB2, DCAF8, TIP120A/CAND1 and TMEM113. Interacts with cyclin E (CCNE1 or CCNE2) and with importins alpha-1 (KPNA2), alpha-3 (KPNA4), alpha-5 (KPNA1) and beta-1 (KPNB1). May interact with WDR26, WDR51B, SNRNP40, WDR61, WDR76 and WDR5. Interacts (unneddylated form) with DCUN1D1, DCUN1D2, DCUN1D3, DCUN1D4 and DCUN1D5; these interactions promote the cullin neddylation. Neddylated. Deneddylated via its interaction with the COP9 signalosome (CSN) complex. In terms of tissue distribution, expressed in oocytes (at protein level).

The protein localises to the cytoplasm. It is found in the nucleus. It functions in the pathway protein modification; protein ubiquitination. Core component of multiple cullin-RING-based E3 ubiquitin-protein ligase complexes which mediate the ubiquitination and subsequent proteasomal degradation of target proteins. The functional specificity of the E3 ubiquitin-protein ligase complex depends on the variable substrate recognition subunit. CUL4B may act within the complex as a scaffold protein, contributing to catalysis through positioning of the substrate and the ubiquitin-conjugating enzyme. Plays a role as part of the E3 ubiquitin-protein ligase complex in polyubiquitination of CDT1, histone H2A, histone H3 and histone H4 in response to radiation-induced DNA damage. Targeted to UV damaged chromatin by DDB2 and may be important for DNA repair and DNA replication. A number of DCX complexes (containing either TRPC4AP or DCAF12 as substrate-recognition component) are part of the DesCEND (destruction via C-end degrons) pathway, which recognizes a C-degron located at the extreme C terminus of target proteins, leading to their ubiquitination and degradation. The DCX(AMBRA1) complex is a master regulator of the transition from G1 to S cell phase by mediating ubiquitination of phosphorylated cyclin-D (CCND1, CCND2 and CCND3). The DCX(AMBRA1) complex also acts as a regulator of Cul5-RING (CRL5) E3 ubiquitin-protein ligase complexes by mediating ubiquitination and degradation of Elongin-C (ELOC) component of CRL5 complexes. Required for ubiquitination of cyclin E (CCNE1 or CCNE2), and consequently, normal G1 cell cycle progression. Component of the DCX(WDR77) complex, which mediates ubiquitination and degradation of Irgm1 in intestinal cells. Regulates the mammalian target-of-rapamycin (mTOR) pathway involved in control of cell growth, size and metabolism. Specific CUL4B regulation of the mTORC1-mediated pathway is dependent upon 26S proteasome function and requires interaction between CUL4B and MLST8. With CUL4A, contributes to ribosome biogenesis. The protein is Cullin-4B of Mus musculus (Mouse).